A 120-amino-acid chain; its full sequence is Putative pterin-4-alpha-carbinolamine dehydratase (120 aa).

It belongs to the pterin-4-alpha-carbinolamine dehydratase family.

It carries out the reaction (4aS,6R)-4a-hydroxy-L-erythro-5,6,7,8-tetrahydrobiopterin = (6R)-L-erythro-6,7-dihydrobiopterin + H2O. This is Putative pterin-4-alpha-carbinolamine dehydratase from Bdellovibrio bacteriovorus (strain ATCC 15356 / DSM 50701 / NCIMB 9529 / HD100).